A 184-amino-acid polypeptide reads, in one-letter code: RNA 2',3'-cyclic phosphodiesterase (184 aa).

H42 serves as the catalytic Proton donor. Short sequence motifs (HXTX) lie at residues 42–45 (HFTL) and 127–130 (HLTV). H127 functions as the Proton acceptor in the catalytic mechanism.

Belongs to the 2H phosphoesterase superfamily. ThpR family.

It carries out the reaction a 3'-end 2',3'-cyclophospho-ribonucleotide-RNA + H2O = a 3'-end 2'-phospho-ribonucleotide-RNA + H(+). Functionally, hydrolyzes RNA 2',3'-cyclic phosphodiester to an RNA 2'-phosphomonoester. The sequence is that of RNA 2',3'-cyclic phosphodiesterase from Methanothermobacter thermautotrophicus (strain ATCC 29096 / DSM 1053 / JCM 10044 / NBRC 100330 / Delta H) (Methanobacterium thermoautotrophicum).